A 163-amino-acid polypeptide reads, in one-letter code: IQSTSMDQGILTEDSMNSFIRTLIQAGIWKNKVPKQAARTKDGMQTTVKKTEAGADAMASKDTRLSFQPIVSVDAELLRQQRRFSSPRVLLSENTPLEPPPLYLTEEPTVLNRTSRRKREGKSHRGEYSVCDSESRWVTDKSSAVDIRGHQVTVLGEIRMGPS.

The N-terminal stretch at 1-3 (IQS) is a signal peptide. The propeptide occupies 4–119 (TSMDQGILTE…VLNRTSRRKR (116 aa)). Asn-112 carries N-linked (GlcNAc...) asparagine glycosylation.

This sequence belongs to the NGF-beta family.

Its subcellular location is the secreted. Its function is as follows. Seems to promote the survival of visceral and proprioceptive sensory neurons. This is Neurotrophin-3 (NTF3) from Eryx colubrinus colubrinus.